Reading from the N-terminus, the 226-residue chain is Large ribosomal subunit protein uL3 (226 aa).

At glutamine 160 the chain carries N5-methylglutamine.

The protein belongs to the universal ribosomal protein uL3 family. In terms of assembly, part of the 50S ribosomal subunit. Forms a cluster with proteins L14 and L19. Post-translationally, methylated by PrmB.

One of the primary rRNA binding proteins, it binds directly near the 3'-end of the 23S rRNA, where it nucleates assembly of the 50S subunit. This is Large ribosomal subunit protein uL3 from Leptothrix cholodnii (strain ATCC 51168 / LMG 8142 / SP-6) (Leptothrix discophora (strain SP-6)).